Reading from the N-terminus, the 74-residue chain is Alpha-conotoxin GeXIVA (74 aa).

Residues 1–22 (MKLTCVLIITVLFLTACQLTTA) form the signal peptide. Residues 23-46 (VTYSRGEHKHRALMSTGTNYRLPK) constitute a propeptide that is removed on maturation. The segment at 56 to 64 (RSPYDRRRR) is interacts with alpha-9-alpha-10 (CHRNA9-CHRNA10) nAChR.

It belongs to the conotoxin O1 superfamily. In terms of processing, the native disulfide bond pairing has not been studied. Three isomers may exist: the bead isomer (I-II; III-IV), the globular isomer (I-III; II-IV), the ribbon isomer (I-IV; II-III). They have all been synthesized and their activity tested. All of them show similar potency on alpha-9-alpha-10 (CHRNA9-CHRNA10) nAChR, showing that disulfide bonds does not significantly affect their activity. In addition, removal of disulfide bonds does not affect the activity on alpha-9-alpha-10 (CHRNA9-CHRNA10) nAChR either. As to expression, expressed by the venom duct.

Its subcellular location is the secreted. In terms of biological role, alpha-conotoxins act on postsynaptic membranes, they bind to the nicotinic acetylcholine receptors (nAChR) and thus inhibit them. This toxin is very potent on alpha-9-alpha-10/CHRNA9-CHRNA10 nAChR (IC(50)=4.61-12 nM for the bead isomer (I-II; III-IV), IC(50)=7-16 nM for the ribbon isomer (I-IV; II-III) and IC(50)=22.7 nM for the globular isomer (I-III; II-IV)). The bead isomer also shows a weak inhibition on other nAChRs (alpha-1-beta-1-delta-epsilon/CHRNA1-CHRNB1-CHRND-CHRNE, alpha-7/CHRNA7, alpha-6/alpha-3-beta-2-beta-3 (CHRNA6/CHRNA3-CHRNB2-CHRNB3), alpha-3-beta-2/CHRNA3-CHRNB2, alpha-2-beta-2/CHRNA2-CHRNB2, alpha-6/alpha-3-beta-4 (CHRNA6/CHRNA3-CHRNB4), alpha-4-beta-2/CHRNA4-CHRNB2, alpha-4-beta-4/CHRNA4-CHRNB4, alpha-2-beta-4/CHRNA2-CHRNB4, alpha-3-beta-4/CHRNA3-CHRNB4). The toxin blockade is voltage-dependent, and its binding site does not overlap with the binding site of the competitive antagonist alpha-conotoxin RgIA. The toxin inhibits Sf9 cell growth. Both the bead and ribbon isomers relieve pain effects in the rat chronic constriction injury (CCI) model of neuropathic pain, and in the acute pain model of tail flick test, but have no effect on motor performance. The polypeptide is Alpha-conotoxin GeXIVA (Conus generalis (General cone)).